A 362-amino-acid polypeptide reads, in one-letter code: tRNA/tmRNA (uracil-C(5))-methyltransferase (362 aa).

Residues Q182, Y210, N215, E231, and D293 each coordinate S-adenosyl-L-methionine. C318 serves as the catalytic Nucleophile. E352 (proton acceptor) is an active-site residue.

The protein belongs to the class I-like SAM-binding methyltransferase superfamily. RNA M5U methyltransferase family. TrmA subfamily.

The catalysed reaction is uridine(54) in tRNA + S-adenosyl-L-methionine = 5-methyluridine(54) in tRNA + S-adenosyl-L-homocysteine + H(+). The enzyme catalyses uridine(341) in tmRNA + S-adenosyl-L-methionine = 5-methyluridine(341) in tmRNA + S-adenosyl-L-homocysteine + H(+). Functionally, dual-specificity methyltransferase that catalyzes the formation of 5-methyluridine at position 54 (m5U54) in all tRNAs, and that of position 341 (m5U341) in tmRNA (transfer-mRNA). The sequence is that of tRNA/tmRNA (uracil-C(5))-methyltransferase from Neisseria meningitidis serogroup A / serotype 4A (strain DSM 15465 / Z2491).